The sequence spans 2298 residues: Non-reducing polyketide synthase pgmA (2298 aa).

The segment at 8 to 333 (LFIFGDQTLD…IYNVLKQSPL (326 aa)) is N-terminal acylcarrier protein transacylase domain (SAT). The tract at residues 336–361 (YLSSKPAQSRQPVSNEGAPEPGNGRQ) is disordered. The segment covering 340–349 (KPAQSRQPVS) has biased composition (polar residues). The region spanning 360–798 (RQKLAIIGMS…GGNSALLVED (439 aa)) is the Ketosynthase family 3 (KS3) domain. Active-site for beta-ketoacyl synthase activity residues include Cys532, His667, and His714. Residues 901 to 1193 (VFAFTGQGAH…GMVKGVLGPQ (293 aa)) are acyl/malonyl transferases. Ser994 serves as the catalytic For acyl/malonyl transferase activity. The tract at residues 1283–1415 (HRVVEETHDS…CVVRFRDRGL (133 aa)) is N-terminal hotdog fold. Residues 1283–1589 (HRVVEETHDS…IQGVPRRVLK (307 aa)) form the PKS/mFAS DH domain. The segment at 1294–1586 (KTRIVIEADI…QISIQGVPRR (293 aa)) is product template (PT) domainn. The active-site Proton acceptor; for dehydratase activity is His1315. The interval 1438–1589 (VTGETARFNR…IQGVPRRVLK (152 aa)) is C-terminal hotdog fold. Residue Asp1502 is the Proton donor; for dehydratase activity of the active site. A disordered region spans residues 1619–1642 (YPVANGHAQATPTSGPVNGEPRPS). Residues 1641–1716 (PSRFPRALEI…SLRALLSEPE (76 aa)) form the Carrier 1 domain. Ser1675 is modified (O-(pantetheine 4'-phosphoryl)serine). Residues 1716-1762 (ERSTNGMPAASAKDTSRFDEIPPMNGHKTNGHVMNGHSNGSSNGLPD) form a disordered region. The segment covering 1751 to 1760 (GHSNGSSNGL) has biased composition (polar residues). In terms of domain architecture, Carrier 2 spans 1765–1840 (KVDFQRVLQI…DLKRYLFPQD (76 aa)). Ser1799 carries the post-translational modification O-(pantetheine 4'-phosphoryl)serine. The tract at residues 1927-2178 (VTGASGSLGG…YWTPVEEVAG (252 aa)) is reductase (R) domain.

The protein operates within pigment biosynthesis. It participates in secondary metabolite biosynthesis. Its function is as follows. Non-reducing polyketide synthase; part of the gene cluster that mediates the biosynthesis of pleosporalin A, ascomycone A, as well as a third cryptic naphthoquinone derived pigment, all responsible for the coloration of conidia. The non-reducing polyketide synthase pgmA is responsible for the condensation of seven acetyl-CoA units to produce the cyclized heptaketide 3-acetonyl-1,6,8-trihydroxy-2-naphthaldehyde. The pathway begins with the biosynthesis of the cyclized heptaketide 3-acetonyl-1,6,8-trihydroxy-2-naphthaldehyde by the NR-PKS pgmA. The C-6 hydroxyl group is further methylated by the O-methyltransferase pgmB to yield fusarubinaldehyde which is in turn oxidized by the cytochrome P450 monooxygenase pgmC at C-9. The C-1 hydroxyl group is then methylated spontaneously. Although pgmE, pgmD and pgmH are essential for the production of pleosporalin A, it is not the case for the 2 other final products and it remains difficult to assign a specific function to each enzyme. PgmF and pgmG seem not to be involved in pigment biosynthesis although they were regulated by the cluster-specific transcription factor pgmR. The protein is Non-reducing polyketide synthase pgmA of Aspergillus terreus (strain NIH 2624 / FGSC A1156).